The primary structure comprises 501 residues: Serine/threonine protein phosphatase 2A 55 kDa regulatory subunit B beta isoform (501 aa).

N-acetylmethionine is present on M1. 5 WD repeats span residues 34 to 73, 110 to 151, 220 to 258, 269 to 309, and 328 to 366; these read QEVD…DHGG, EIEE…IKKI, AHDY…QSFN, DLTE…LCDS, and EIIA…GPVA. Residues 439–449 are compositionally biased toward polar residues; that stretch reads TPARPSRSIGS. The disordered stretch occupies residues 439 to 466; the sequence is TPARPSRSIGSMTRVVRRGSESPGTEAN. A WD 6 repeat occupies 471 to 501; it reads DFTTKLLHMAWHPTENSIACAAANSLYMYYA.

It belongs to the phosphatase 2A regulatory subunit B family. PP2A consists of a common heteromeric enzyme, composed of a catalytic subunit (subunits C), a constant regulatory subunit (subunit A), and a variety of regulatory subunits such as subunits B (the R2/B/PR55/B55, R3/B''/PR72/PR130/PR59 and R5/B'/B56 families). Interacts with SIC/RON3. As to expression, expressed ubiquitously.

The B regulatory subunit may modulate substrate selectivity and catalytic activity, and may also direct the localization of the catalytic enzyme to a particular subcellular compartment. This Arabidopsis thaliana (Mouse-ear cress) protein is Serine/threonine protein phosphatase 2A 55 kDa regulatory subunit B beta isoform (PP2AB2).